Here is a 2063-residue protein sequence, read N- to C-terminus: Nuclear receptor coactivator 6 (2063 aa).

The TBP/GTF2A-binding region stretch occupies residues 1-928; it reads MVLDDLPNLE…PPRKKKNSQQ (928 aa). The interval 1–1057 is CREBBP-binding region; it reads MVLDDLPNLE…LPVSQNVHPP (1057 aa). The tract at residues 1–1310 is NCOA1-binding region; the sequence is MVLDDLPNLE…QTHKLDSVVV (1310 aa). At R95 the chain carries Asymmetric dimethylarginine. Disordered stretches follow at residues 184–251, 281–549, and 789–811; these read IPPG…VNRQ, QQQQ…APQL, and RPPG…ANND. A compositionally biased stretch (low complexity) spans 281–300; it reads QQQQQLQARPPQQHQQQQPQ. Polar residues-rich tracts occupy residues 353-368, 379-406, 417-453, 462-502, and 522-549; these read MQQQ…TVQT, GSQQ…QMKS, PLQQ…QQQM, PLPQ…QGPQ, and GQAN…APQL. An NCOA6IP-binding region region spans residues 773 to 927; the sequence is VNNSPSQVMG…KPPRKKKNSQ (155 aa). Position 884 is a phosphoserine; by MAPK; in vitro (S884). The LXXLL motif 1 motif lies at 887–891; that stretch reads LVNLL. Disordered stretches follow at residues 899 to 1278, 1310 to 1353, and 1448 to 1474; these read HFGV…LNPT, VNSG…KAPK, and EVKM…PSVE. Positions 903–912 are enriched in low complexity; the sequence is NNKQNNTNAN. Basic residues predominate over residues 913–925; it reads KPKKKKPPRKKKN. Residues 982-992 show a composition bias toward low complexity; sequence PLQQMPPQLMQ. Residues 995–1020 show a composition bias toward pro residues; sequence APPPQPPQQQPQPQLPQQQQPPPPSQ. The span at 1021-1041 shows a compositional bias: low complexity; the sequence is PQSQQQQQQQQQMMMMLMMQQ. Asymmetric dimethylarginine occurs at positions 1047 and 1058. Polar residues predominate over residues 1063–1075; that stretch reads PDSQRMPMQQSGS. The residue at position 1096 (R1096) is an Asymmetric dimethylarginine. Composition is skewed to polar residues over residues 1104–1125, 1173–1191, and 1202–1214; these read PLGS…SSSP, LSAT…SLPS, and APTQ…TPNR. Residues 1219-1232 are compositionally biased toward pro residues; that stretch reads PYYPQTPNNRPPST. Over residues 1310–1320 the composition is skewed to polar residues; the sequence is VNSGKQSNSGA. Positions 1322–1345 are enriched in low complexity; it reads KRASPSNSRRSSPGSSRKTTPSPG. The short motif at 1491–1495 is the LXXLL motif 2 element; sequence LSQLL. Residues 1641-2063 are EP300/CRSP3-binding region; it reads SEGQSAAQSN…AVQSKRRKSK (423 aa). Positions 1738–1820 are disordered; the sequence is ATPVQLPSPP…VSSSKGKGKV (83 aa). Over residues 1750-1763 the composition is skewed to low complexity; it reads SSPVVPSHPPVQQV. Over residues 1773 to 1798 the composition is skewed to polar residues; the sequence is PQVNTSADQNTLPSSQSTTMVSPLLT. Positions 1799–1815 are enriched in low complexity; sequence NSPGSSGNRRSPVSSSK. Residues K1819 and K1822 each carry the N6-acetyllysine modification. Disordered regions lie at residues 1837–1908 and 1995–2063; these read GSLE…LPGG and IVSG…RKSK. Positions 2002-2011 are enriched in basic and acidic residues; sequence EPKEIVEKSK. A Phosphoserine modification is found at S2018.

In terms of assembly, monomer and homodimer. Interacts with RBM39. Interacts in vitro with the basal transcription factors GTF2A and TBP, suggesting an autonomous transactivation function. Interacts with NCOA1, CRSP3, RBM14, the histone acetyltransferases EP300 and CREBBP, and with the methyltransferases NCOA6IP and PRMT2/HRMT1L1. Component of the MLL2/3 complex (also named ASCOM complex), at least composed of KMT2D/MLL2 or KMT2C/MLL3, ASH2L, RBBP5, WDR5, NCOA6, DPY30, KDM6A, PAXIP1/PTIP, PAGR1 and alpha- and beta-tubulin. Interacts with ZNF335; may enhance ligand-dependent transcriptional activation by nuclear hormone receptors. In terms of processing, phosphorylated by PRKDC. Post-translationally, phosphorylation on Ser-884 leads to a strong decrease in binding to ESR1 and ESR2. As to expression, ubiquitous. Highly expressed in brain, prostate, testis and ovary; weakly expressed in lung, thymus and small intestine.

It is found in the nucleus. Its function is as follows. Nuclear receptor coactivator that directly binds nuclear receptors and stimulates the transcriptional activities in a hormone-dependent fashion. Coactivates expression in an agonist- and AF2-dependent manner. Involved in the coactivation of different nuclear receptors, such as for steroids (GR and ERs), retinoids (RARs and RXRs), thyroid hormone (TRs), vitamin D3 (VDR) and prostanoids (PPARs). Probably functions as a general coactivator, rather than just a nuclear receptor coactivator. May also be involved in the coactivation of the NF-kappa-B pathway. May coactivate expression via a remodeling of chromatin and its interaction with histone acetyltransferase proteins. This Homo sapiens (Human) protein is Nuclear receptor coactivator 6 (NCOA6).